Consider the following 370-residue polypeptide: Putative transport protein YdiK (370 aa).

Over 1 to 17 (MVNVRQPRDVAQILLSV) the chain is Periplasmic. Residues 18 to 38 (LFLAIMIVACLWIVQPFILGF) form a helical membrane-spanning segment. Position 39 (alanine 39) is a topological domain, cytoplasmic. Residues 40–60 (WAGTVVIATWPVLLRLQKIMF) form a helical membrane-spanning segment. Residues 61-65 (GRRSL) lie on the Periplasmic side of the membrane. A helical membrane pass occupies residues 66–86 (AVLVMTLLLVMVFIIPIALLV). The Cytoplasmic segment spans residues 87–106 (NSIVDGSGPLIKAISSGDMT). Residues 107-127 (LPDLAWLNTIPVIGAKLYAGW) traverse the membrane as a helical segment. The Periplasmic portion of the chain corresponds to 128 to 156 (HNLLDMGGTAIMAKVRPYIGTTTTWFVGQ). The helical transmembrane segment at 157–177 (AAHIGRFMVHCALMLLFSALL) threads the bilayer. Topologically, residues 178-213 (YWRGEQVAQGIRHFATRLAGVRGDAAVLLAAQAIRA) are cytoplasmic. The helical transmembrane segment at 214–234 (VALGVVVTALVQAVLGGIGLA) threads the bilayer. Topologically, residues 235–248 (VSGVPYATLLTVLM) are periplasmic. A helical membrane pass occupies residues 249 to 269 (ILSCLVQLGPLPVLIPAIIWL). Topologically, residues 270–274 (YWTGD) are cytoplasmic. Residues 275-295 (TTWGTVLLVWSGVVGTLDNVI) traverse the membrane as a helical segment. Residues 296–308 (RPMLIRMGADLPL) are Periplasmic-facing. A helical transmembrane segment spans residues 309 to 329 (ILILSGVIGGLIAFGMIGLFI). Residues 330-370 (GPVLLAVSWRLFAAWVEEVPPPTDQPEEILEELGEIEKPNK) are Cytoplasmic-facing.

This sequence belongs to the autoinducer-2 exporter (AI-2E) (TC 2.A.86) family.

Its subcellular location is the cell inner membrane. In Escherichia coli (strain K12), this protein is Putative transport protein YdiK (ydiK).